We begin with the raw amino-acid sequence, 328 residues long: DNA-directed RNA polymerase subunit alpha (328 aa).

Positions 1 to 233 (MHNSATEFLK…EQLEAFIDLR (233 aa)) are alpha N-terminal domain (alpha-NTD). The segment at 247 to 328 (FDPVLLRPVD…WPPVSILKND (82 aa)) is alpha C-terminal domain (alpha-CTD).

It belongs to the RNA polymerase alpha chain family. In terms of assembly, homodimer. The RNAP catalytic core consists of 2 alpha, 1 beta, 1 beta' and 1 omega subunit. When a sigma factor is associated with the core the holoenzyme is formed, which can initiate transcription.

The catalysed reaction is RNA(n) + a ribonucleoside 5'-triphosphate = RNA(n+1) + diphosphate. DNA-dependent RNA polymerase catalyzes the transcription of DNA into RNA using the four ribonucleoside triphosphates as substrates. The chain is DNA-directed RNA polymerase subunit alpha from Wigglesworthia glossinidia brevipalpis.